Here is a 140-residue protein sequence, read N- to C-terminus: ATP synthase epsilon chain (140 aa).

Belongs to the ATPase epsilon chain family. F-type ATPases have 2 components, CF(1) - the catalytic core - and CF(0) - the membrane proton channel. CF(1) has five subunits: alpha(3), beta(3), gamma(1), delta(1), epsilon(1). CF(0) has three main subunits: a, b and c.

The protein resides in the cell inner membrane. In terms of biological role, produces ATP from ADP in the presence of a proton gradient across the membrane. This Neisseria meningitidis serogroup A / serotype 4A (strain DSM 15465 / Z2491) protein is ATP synthase epsilon chain.